A 148-amino-acid chain; its full sequence is UPF0756 membrane protein NMA2160 (148 aa).

Transmembrane regions (helical) follow at residues 13–35 (LILL…LLLM), 50–70 (HGLN…LVSG), 80–100 (FLNF…WLAG), and 121–141 (VIGV…AGIL).

It belongs to the UPF0756 family.

The protein localises to the cell membrane. This Neisseria meningitidis serogroup A / serotype 4A (strain DSM 15465 / Z2491) protein is UPF0756 membrane protein NMA2160.